Reading from the N-terminus, the 273-residue chain is Putative tyrosine-protein phosphatase H16_A0669 (273 aa).

The N-terminal stretch at 1-15 (MIKWLQRAGCLSAHA) is a signal peptide. Cys169 (phosphocysteine intermediate) is an active-site residue.

This sequence belongs to the protein-tyrosine phosphatase family.

The enzyme catalyses O-phospho-L-tyrosyl-[protein] + H2O = L-tyrosyl-[protein] + phosphate. In Cupriavidus necator (strain ATCC 17699 / DSM 428 / KCTC 22496 / NCIMB 10442 / H16 / Stanier 337) (Ralstonia eutropha), this protein is Putative tyrosine-protein phosphatase H16_A0669.